Reading from the N-terminus, the 461-residue chain is ADP-specific phosphofructokinase (461 aa).

The ADPK domain maps to 1–457 (MVRELLEKAR…FTSYLAMLKE (457 aa)). Mg(2+) is bound by residues Glu-268, Glu-298, and Asp-441. Residue Asp-441 is the Proton acceptor of the active site.

This sequence belongs to the carbohydrate kinase PfkC family. It depends on Mg(2+) as a cofactor.

Its subcellular location is the cytoplasm. The catalysed reaction is beta-D-fructose 6-phosphate + ADP = beta-D-fructose 1,6-bisphosphate + AMP + H(+). Its pathway is carbohydrate degradation; glycolysis. In terms of biological role, catalyzes the phosphorylation of fructose 6-phosphate to fructose 1,6-bisphosphate using ADP as the phosphate donor. This Thermococcus kodakarensis (strain ATCC BAA-918 / JCM 12380 / KOD1) (Pyrococcus kodakaraensis (strain KOD1)) protein is ADP-specific phosphofructokinase.